The sequence spans 342 residues: Growth hormone-regulated TBC protein 1 (342 aa).

In terms of domain architecture, Rab-GAP TBC spans 72–263 (GIPNEHRSHV…RIWDCLFFEG (192 aa)).

May act as a GTPase-activating protein for Rab family protein(s). The chain is Growth hormone-regulated TBC protein 1 (grtp1) from Xenopus laevis (African clawed frog).